We begin with the raw amino-acid sequence, 113 residues long: Iron-sulfur cluster insertion protein ErpA (113 aa).

Cys41, Cys105, and Cys107 together coordinate iron-sulfur cluster.

This sequence belongs to the HesB/IscA family. Homodimer. Iron-sulfur cluster is required as a cofactor.

Its function is as follows. Required for insertion of 4Fe-4S clusters for at least IspG. In Vibrio vulnificus (strain CMCP6), this protein is Iron-sulfur cluster insertion protein ErpA.